The following is a 4391-amino-acid chain: Basement membrane-specific heparan sulfate proteoglycan core protein (4391 aa).

Positions 1-21 (MGWRAAGALLLALLLHGRLLA) are cleaved as a signal peptide. T42 carries O-linked (GalNAc...) threonine glycosylation. O-linked (Xyl...) (heparan sulfate) serine glycans are attached at residues S65, S71, and S76. Residues 80–191 (QMVYFRALVN…QGFQFRRLGT (112 aa)) enclose the SEA domain. N-linked (GlcNAc...) asparagine glycosylation occurs at N89. LDL-receptor class A domains are found at residues 198 to 235 (ACTEAEFACHSYNECVALEYRCDRRPDCRDMSDELNCE), 284 to 320 (PCGPQEAACRNGHCIPRDYLCDGQEDCEDGSDELDCG), 324 to 360 (PCEPNEFPCGNGHCALKLWRCDGDFDCEDRTDEANCP), and 367 to 404 (VCGPTQFRCVSTNMCIPASFHCDEESDCPDRSDEFGCM). Disulfide bonds link C199/C212, C206/C225, C219/C234, C285/C297, C292/C310, C304/C319, C325/C337, C332/C350, C344/C359, C368/C381, C375/C394, and C388/C403. Residues 405–504 (PPQVVTPPRE…VLELVPQRGP (100 aa)) enclose the Ig-like C2-type 1 domain. The region spanning 521 to 530 (CFCFGITSVC) is the Laminin EGF-like 1; first part domain. In terms of domain architecture, Laminin IV type A 1 spans 538–730 (DQIRLRFDQP…SHGRAHSVEE (193 aa)). N-linked (GlcNAc...) asparagine glycosylation is present at N554. Positions 731 to 763 (CRCPIGYSGLSCESCDAHFTRVPGGPYLGTCSG) constitute a Laminin EGF-like 1; second part domain. 11 disulfides stabilise this stretch: C764/C773, C766/C780, C783/C792, C795/C811, C814/C829, C816/C839, C842/C851, C854/C869, C879/C892, C894/C903, and C906/C921. Laminin EGF-like domains are found at residues 764–813 (CNCN…SCRP) and 814–871 (CPCP…KCRP). The Laminin EGF-like 4; truncated domain maps to 879–923 (CDERGSMGTSGEACRCKNNVVGRLCNECADGSFHLSTRNPDGCLK). The region spanning 924-933 (CFCMGVSRHC) is the Laminin EGF-like 5; first part domain. A Laminin IV type A 2 domain is found at 941–1125 (AQLHGASEEP…GQDPALEVEQ (185 aa)). The region spanning 1126 to 1158 (CSCPPGYRGPSCQDCDTGYTRTPSGLYLGTCER) is the Laminin EGF-like 5; second part domain. 12 cysteine pairs are disulfide-bonded: C1159–C1168, C1161–C1175, C1178–C1187, C1190–C1206, C1209–C1224, C1211–C1234, C1237–C1246, C1249–C1263, C1275–C1287, C1277–C1293, C1295–C1304, and C1307–C1322. 3 Laminin EGF-like domains span residues 1159–1208 (CSCH…DCQL), 1209–1265 (CPCY…PCQR), and 1275–1324 (CNCD…GCLP). The region spanning 1325–1334 (CFCMGITQQC) is the Laminin EGF-like 9; first part domain. A Laminin IV type A 3 domain is found at 1344-1529 (ISTHFAPGDF…NRPRALEVEE (186 aa)). Residues 1530-1562 (CRCPPGYIGLSCQDCAPGYTRTGSGLYLGHCEL) form the Laminin EGF-like 9; second part domain. 8 cysteine pairs are disulfide-bonded: C1563/C1572, C1565/C1579, C1582/C1591, C1594/C1610, C1613/C1628, C1615/C1638, C1641/C1650, and C1653/C1668. Laminin EGF-like domains follow at residues 1563-1612 (CECN…DCQP) and 1613-1670 (CACP…QCLP). Ig-like C2-type domains lie at 1677–1771 (LVVE…SKPI), 1772–1865 (TVTV…TLSA), 1866–1955 (PVVS…GGGG), 1956–2051 (PRVQ…ASPP), 2052–2151 (PVKI…PGST), 2152–2244 (RPIR…PGPI), 2245–2340 (PPVR…AGST), 2341–2436 (QPIR…LGVT), 2437–2533 (PTVR…QGVA), 2534–2629 (YPVR…PSVS), 2630–2726 (PPIR…PGSS), 2727–2826 (MPIR…PGGA), 2827–2924 (PPIR…PGLA), 2925–3021 (QPIY…RLRS), 3022–3112 (PVIS…HGPP), 3113–3211 (TVSV…APGA), 3212–3298 (PQVQ…VESP), 3299–3399 (PYAT…AGST), 3400–3488 (PTVQ…ALPS), 3489–3574 (VLIN…LVQA), and 3575–3662 (LPQI…PERV). N-linked (GlcNAc...) asparagine glycosylation is present at N1755. N2121 is a glycosylation site (N-linked (GlcNAc...) asparagine). The segment at 2994 to 3014 (ASGPGPEQEASFTVTVPPSEG) is disordered. S2995 is a glycosylation site (O-linked (Xyl...) (chondroitin sulfate) serine). The span at 3003 to 3014 (ASFTVTVPPSEG) shows a compositional bias: polar residues. Residues N3072 and N3105 are each glycosylated (N-linked (GlcNAc...) asparagine). N-linked (GlcNAc...) asparagine glycosylation is present at N3279. The 181-residue stretch at 3663 to 3843 (VPYFTQTPYS…DLNLTAHGIS (181 aa)) folds into the Laminin G-like 1 domain. N-linked (GlcNAc...) asparagine glycosylation is found at N3780 and N3836. Cystine bridges form between C3819-C3845, C3848-C3859, C3853-C3869, C3871-C3880, C3888-C3899, C3893-C3910, and C3912-C3921. EGF-like domains lie at 3844–3881 (HCPTCRDRPCQNGGQCHDSESSSYVCVCPAGFTGSRCE) and 3884–3922 (QALHCHPEACGPDATCVNRPDGRGYTCRCHLGRSGLRCE). One can recognise a Laminin G-like 2 domain in the interval 3928-4103 (TTPSLSGAGS…LGSQGIGQCY (176 aa)). S3933 is a glycosylation site (O-linked (Xyl...) (chondroitin sulfate) serine). N4068 carries N-linked (GlcNAc...) asparagine glycosylation. 7 disulfides stabilise this stretch: C4076–C4102, C4108–C4119, C4113–C4129, C4131–C4140, C4147–C4159, C4153–C4164, and C4166–C4175. 2 consecutive EGF-like domains span residues 4104–4141 (DSSPCERQPCQHGATCMPAGEYEFQCLCRDGFKGDLCE) and 4143–4176 (EENPCQLREPCLHGGTCQGTRCLCLPGFSGPRCQ). Residues 4149–4151 (LRE) form a mediates motor neuron attachment region. O-linked (Xyl...) (chondroitin sulfate) serine glycosylation is found at S4179 and S4193. The Laminin G-like 3 domain maps to 4201 to 4389 (QYGAYFHDDG…AQAGANTRPC (189 aa)). 2 residues coordinate Ca(2+): D4258 and L4275. A mediates motor neuron attachment region spans residues 4299 to 4301 (LRE). Residues A4325 and N4327 each contribute to the Ca(2+) site. The cysteines at positions 4355 and 4389 are disulfide-linked. The interval 4364-4391 (ARPGAPPPQPLDLQHRAQAGANTRPCPS) is disordered.

Has a strong tendency to aggregate in dimers or stellate structures. Interacts with other basement membrane components such as laminin, prolargin and collagen type IV. Interacts with COL13A1. Interacts with FGFBP1. Interacts with VWA1. Interacts (via C-terminus) with ECM1 (via C-terminus). Interacts with SVEP1. Post-translationally, proteolytic processing produces the C-terminal angiogenic peptide, endorepellin. This peptide can be further processed to produce the LG3 peptide. O-glycosylated with core 1 or possibly core 8 glycans. Contains three heparan sulfate chains. Also contains chondroitin sulfate. In terms of tissue distribution, detected in cerebrospinal fluid, fibroblasts and urine (at protein level).

The protein resides in the secreted. The protein localises to the extracellular space. It is found in the extracellular matrix. It localises to the basement membrane. Integral component of basement membranes. Component of the glomerular basement membrane (GBM), responsible for the fixed negative electrostatic membrane charge, and which provides a barrier which is both size- and charge-selective. It serves as an attachment substrate for cells. Plays essential roles in vascularization. Critical for normal heart development and for regulating the vascular response to injury. Also required for avascular cartilage development. In terms of biological role, anti-angiogenic and anti-tumor peptide that inhibits endothelial cell migration, collagen-induced endothelial tube morphogenesis and blood vessel growth in the chorioallantoic membrane. Blocks endothelial cell adhesion to fibronectin and type I collagen. Anti-tumor agent in neovascularization. Interaction with its ligand, integrin alpha2/beta1, is required for the anti-angiogenic properties. Evokes a reduction in phosphorylation of receptor tyrosine kinases via alpha2/beta1 integrin-mediated activation of the tyrosine phosphatase, PTPN6. Functionally, has anti-angiogenic properties that require binding of calcium ions for full activity. This Homo sapiens (Human) protein is Basement membrane-specific heparan sulfate proteoglycan core protein (HSPG2).